The following is a 227-amino-acid chain: 7-cyano-7-deazaguanine synthase (227 aa).

16–26 provides a ligand contact to ATP; that stretch reads FSGGQDSTTCL. Residues C194, C202, C205, and C208 each contribute to the Zn(2+) site.

This sequence belongs to the QueC family. Requires Zn(2+) as cofactor.

The enzyme catalyses 7-carboxy-7-deazaguanine + NH4(+) + ATP = 7-cyano-7-deazaguanine + ADP + phosphate + H2O + H(+). It functions in the pathway purine metabolism; 7-cyano-7-deazaguanine biosynthesis. Catalyzes the ATP-dependent conversion of 7-carboxy-7-deazaguanine (CDG) to 7-cyano-7-deazaguanine (preQ(0)). The sequence is that of 7-cyano-7-deazaguanine synthase from Haemophilus influenzae (strain 86-028NP).